The primary structure comprises 627 residues: Bromodomain adjacent to zinc finger domain protein 1A (627 aa).

The segment at 222 to 272 adopts a PHD-type zinc-finger fold; that stretch reads NARCKVCRKKGDGESMVLCDGCDRGHHIYCVRPKLKYVPEGDWFCPECHPK. The tract at residues 270–503 is disordered; sequence HPKQRSHRLP…NRRSSGRHHG (234 aa). Over residues 272 to 283 the composition is skewed to basic residues; it reads KQRSHRLPSRHR. Residues 281-327 are a coiled coil; it reads RHRYSMDSDEEEEEELDQKEEEEEEEEQEELSESENEQEDEMSEEES. A compositionally biased stretch (acidic residues) spans 287–326; the sequence is DSDEEEEEELDQKEEEEEEEEQEELSESENEQEDEMSEEE. A compositionally biased stretch (low complexity) spans 348–359; sequence TGKLGPKPKTGK. 2 stretches are compositionally biased toward polar residues: residues 386 to 395 and 402 to 412; these read EPTSRLSASD and SPNSSLVNVVT. Residues 417–431 are compositionally biased toward basic residues; it reads GRGKGKGRGRGRGRL. Residues 486 to 496 show a composition bias toward polar residues; sequence DISSLEQGNRR. Positions 502–605 constitute a Bromo domain; that stretch reads HGVHELSACE…SFFITEAQNL (104 aa).

It belongs to the WAL family. In terms of assembly, together with p18 and p20 proteins, it forms the Xenopus version of CHRAC. Post-translationally, phosphorylated in mitosis.

The protein resides in the nucleus. Regulatory subunit of a chromatin remodeling complex, which forms ordered nucleosome arrays on chromatin and slides edge- and center-positioned histone octamers away from their original location on the DNA template to facilitate access to DNA during DNA-templated processes such as DNA replication, transcription, and repair. Involved in regulating the spacing of nucleosomes along the chromatin and have the ability to slide mononucleosomes to the center of a DNA template in an ATP-dependent manner. May play a role in transcriptional regulation. The sequence is that of Bromodomain adjacent to zinc finger domain protein 1A (baz1a) from Xenopus laevis (African clawed frog).